The sequence spans 248 residues: ATP synthase subunit a, chloroplastic (248 aa).

A run of 5 helical transmembrane segments spans residues 38–58 (QVLITSWVVIAILLGSATIVV), 96–116 (VPFIGTMFLFIFVSNWSGALL), 135–155 (INTTVALALPTSVAYFYAGIS), 200–220 (LVVVVLVSLVPSLVPIPVMFL), and 221–241 (GLFTSGIQALIFATLAAAYIG).

It belongs to the ATPase A chain family. In terms of assembly, F-type ATPases have 2 components, CF(1) - the catalytic core - and CF(0) - the membrane proton channel. CF(1) has five subunits: alpha(3), beta(3), gamma(1), delta(1), epsilon(1). CF(0) has four main subunits: a, b, b' and c.

The protein localises to the plastid. It is found in the chloroplast thylakoid membrane. Its function is as follows. Key component of the proton channel; it plays a direct role in the translocation of protons across the membrane. The chain is ATP synthase subunit a, chloroplastic from Amborella trichopoda.